The sequence spans 66 residues: Large ribosomal subunit protein uL30 (66 aa).

The protein belongs to the universal ribosomal protein uL30 family. As to quaternary structure, part of the 50S ribosomal subunit.

The polypeptide is Large ribosomal subunit protein uL30 (Chloroherpeton thalassium (strain ATCC 35110 / GB-78)).